Here is a 98-residue protein sequence, read N- to C-terminus: C-X-C motif chemokine 10 (98 aa).

Positions 1–21 (MNPSAAVVLCLVLLSLSGTQG) are cleaved as a signal peptide. Arg26 carries the post-translational modification Citrulline. 2 disulfide bridges follow: Cys30/Cys57 and Cys32/Cys74.

Belongs to the intercrine alpha (chemokine CxC) family. In terms of assembly, monomer, dimer, and tetramer. Interacts with CXCR3 (via N-terminus). In terms of tissue distribution, in the central nervous system, CXCL10 is predominantly localized to activated neurons. Expressed in both microglia and astrocytes.

It is found in the secreted. Pro-inflammatory cytokine that is involved in a wide variety of processes such as chemotaxis, differentiation, and activation of peripheral immune cells, regulation of cell growth, apoptosis and modulation of angiostatic effects. Plays thereby an important role during viral infections by stimulating the activation and migration of immune cells to the infected sites. Mechanistically, binding of CXCL10 to the CXCR3 receptor activates G protein-mediated signaling and results in downstream activation of phospholipase C-dependent pathway, an increase in intracellular calcium production and actin reorganization. In turn, recruitment of activated Th1 lymphocytes occurs at sites of inflammation. Activation of the CXCL10/CXCR3 axis also plays an important role in neurons in response to brain injury for activating microglia, the resident macrophage population of the central nervous system, and directing them to the lesion site. This recruitment is an essential element for neuronal reorganization. The sequence is that of C-X-C motif chemokine 10 (Cxcl10) from Rattus norvegicus (Rat).